Reading from the N-terminus, the 467-residue chain is Ergochrome gene cluster transcriptional coactivator CPUR_05432 (467 aa).

The HTH iclR-type domain maps to 109-179 (IAIQCEMLGS…RRGYVAHTPL (71 aa)). A DNA-binding region (H-T-H motif) is located at residues 139 to 158 (IQDVANLSNVPEQQLAQMIG).

It localises to the nucleus. Functionally, transcriptional coactivator; part of the gene cluster responsible for the typical purple-black color of the ergot sclerotia. The ergochrome gene cluster produces several ergot pigments including the yellow ergochrome secalonic acid and its derivatives, as well as the red anthraquinones endocrocin and clavorubin. With CPUR_05433, coregulates the production of geodin. The protein is Ergochrome gene cluster transcriptional coactivator CPUR_05432 of Claviceps purpurea (strain 20.1) (Ergot fungus).